Consider the following 510-residue polypeptide: Ankyrin repeat domain-containing protein 13C-A (510 aa).

A compositionally biased stretch (basic and acidic residues) spans 1–19; the sequence is MTGEKIRSLHKDQKPSKDE. Positions 1 to 35 are disordered; it reads MTGEKIRSLHKDQKPSKDEDLLEPDEEATAGGTFT. ANK repeat units follow at residues 80–111, 112–141, and 145–174; these read DVYFPVHECVLKGDIRRLSSLIRSHSIGQKDS, HGNTPLHLAVMLGNKECAHLLLAHNAPVKV, and QGWSPLAEAISYGDRQMITALLRKLKQQSR.

Its subcellular location is the endoplasmic reticulum membrane. Acts as a molecular chaperone for G protein-coupled receptors, regulating their biogenesis and exit from the ER. The polypeptide is Ankyrin repeat domain-containing protein 13C-A (ankrd13c-a) (Xenopus laevis (African clawed frog)).